Reading from the N-terminus, the 469-residue chain is Acetyl-CoA decarbonylase/synthase complex subunit beta 2 (469 aa).

4 residues coordinate [Ni-Fe-S] cluster: C187, C190, C276, and C278.

Belongs to the CdhC family. In terms of assembly, monomer. The ACDS complex is made up of alpha, epsilon, beta, gamma and delta chains with a probable stoichiometry of (alpha(2)epsilon(2))(4)-beta(8)-(gamma(1)delta(1))(8) (Potential). [Ni-Fe-S] cluster serves as cofactor.

The enzyme catalyses Co(I)-[corrinoid Fe-S protein] + acetyl-CoA + H(+) = methyl-Co(III)-[corrinoid Fe-S protein] + CO + CoA. Its function is as follows. Part of a complex that catalyzes the reversible cleavage of acetyl-CoA, allowing autotrophic growth from CO(2). The alpha-epsilon complex generates CO from CO(2), while the beta subunit (this protein) combines the CO with CoA and a methyl group to form acetyl-CoA. The methyl group, which is incorporated into acetyl-CoA, is transferred to the beta subunit by a corrinoid iron-sulfur protein (the gamma-delta complex). The protein is Acetyl-CoA decarbonylase/synthase complex subunit beta 2 (cdhC2) of Methanocaldococcus jannaschii (strain ATCC 43067 / DSM 2661 / JAL-1 / JCM 10045 / NBRC 100440) (Methanococcus jannaschii).